Consider the following 247-residue polypeptide: MTPRYRRVVLKASGEALMGKQGFGIDVSVVDQIAADIADALSLGVEVGVVIGGGNIFRGVAVASKGGDRVTGDHMGMLATVINSLALRTSLAKIGVEAVVLSAIAMPELCESFSQRQALAYMDAGKVVIFAGGTGNPFFTTDSAAALRAAEIGADALFKGTQVDGVYSADPRKDANAVRYDHITHDQVIRDGLAIMDTAAIALARENNIPIIVFSIHEAGGFGAILRGGGHCTIVDDDPAAQQQASA.

11-14 (KASG) contacts ATP. The involved in allosteric activation by GTP stretch occupies residues 19–24 (GKQGFG). UMP is bound at residue G53. ATP-binding residues include G54 and R58. UMP is bound by residues D73 and 134–141 (TGNPFFTT). ATP-binding residues include T161, Q162, Y167, and D170.

It belongs to the UMP kinase family. Homohexamer.

The protein resides in the cytoplasm. It catalyses the reaction UMP + ATP = UDP + ADP. It functions in the pathway pyrimidine metabolism; CTP biosynthesis via de novo pathway; UDP from UMP (UMPK route): step 1/1. Allosterically activated by GTP. Inhibited by UTP. In terms of biological role, catalyzes the reversible phosphorylation of UMP to UDP. The chain is Uridylate kinase from Chelativorans sp. (strain BNC1).